The sequence spans 291 residues: Dihydroorotate dehydrogenase A (fumarate) (291 aa).

FMN contacts are provided by residues S18 and 42-43; that span reads KS. Residues K42, 66–70, and N126 each bind substrate; that span reads NAVGL. N126 provides a ligand contact to FMN. C129 (nucleophile) is an active-site residue. Residues K164 and I190 each contribute to the FMN site. 191–192 is a substrate binding site; the sequence is NT. Residues G216, 242-243, and 264-265 contribute to the FMN site; these read GG and GS.

This sequence belongs to the dihydroorotate dehydrogenase family. Type 1 subfamily. In terms of assembly, homodimer. Requires FMN as cofactor.

It localises to the cytoplasm. It carries out the reaction (S)-dihydroorotate + fumarate = orotate + succinate. The protein operates within pyrimidine metabolism; UMP biosynthesis via de novo pathway. Catalyzes the conversion of dihydroorotate to orotate with fumarate as the electron acceptor. This Lacticaseibacillus paracasei (strain ATCC 334 / BCRC 17002 / CCUG 31169 / CIP 107868 / KCTC 3260 / NRRL B-441) (Lactobacillus paracasei) protein is Dihydroorotate dehydrogenase A (fumarate) (pyrD).